Reading from the N-terminus, the 173-residue chain is Pyridoxal 5'-phosphate synthase subunit PdxT (173 aa).

49-51 (GES) contacts L-glutamine. Catalysis depends on Cys81, which acts as the Nucleophile. L-glutamine contacts are provided by residues Arg113 and 141–142 (IR).

It belongs to the glutaminase PdxT/SNO family. In the presence of PdxS, forms a dodecamer of heterodimers. Only shows activity in the heterodimer.

The catalysed reaction is aldehydo-D-ribose 5-phosphate + D-glyceraldehyde 3-phosphate + L-glutamine = pyridoxal 5'-phosphate + L-glutamate + phosphate + 3 H2O + H(+). It carries out the reaction L-glutamine + H2O = L-glutamate + NH4(+). It participates in cofactor biosynthesis; pyridoxal 5'-phosphate biosynthesis. Functionally, catalyzes the hydrolysis of glutamine to glutamate and ammonia as part of the biosynthesis of pyridoxal 5'-phosphate. The resulting ammonia molecule is channeled to the active site of PdxS. This Mycolicibacterium paratuberculosis (strain ATCC BAA-968 / K-10) (Mycobacterium paratuberculosis) protein is Pyridoxal 5'-phosphate synthase subunit PdxT.